The chain runs to 657 residues: Protein PSK SIMULATOR 1 (657 aa).

4 stretches are compositionally biased toward polar residues: residues 1–15, 26–39, 62–76, and 540–556; these read MGGL…NNAP, HLNN…SHSG, ESFS…SHPQ, and RSPN…SHNP. 2 disordered regions span residues 1 to 80 and 534 to 559; these read MGGL…NIED and PVKS…PSMG. The N-myristoyl glycine moiety is linked to residue Gly2.

It localises to the nucleus. Its function is as follows. Promotes seedling growth probably via the regulation of phytosulfokine (PSK) signaling; PSK are peptide phytohormones acting as growth factors. Together with PSI2 and PSI3, required during vegetative growth and reproduction. May also have a function in carbohydrate metabolism. In Arabidopsis thaliana (Mouse-ear cress), this protein is Protein PSK SIMULATOR 1.